The following is a 159-amino-acid chain: Phosphopantetheine adenylyltransferase (159 aa).

Threonine 8 lines the substrate pocket. Residues 8–9 (TF) and histidine 16 contribute to the ATP site. Residues lysine 40, threonine 72, and arginine 86 each coordinate substrate. Residues 87–89 (GLR), glutamate 97, and 122–128 (YSFLSSS) each bind ATP.

The protein belongs to the bacterial CoaD family. As to quaternary structure, homohexamer. The cofactor is Mg(2+).

Its subcellular location is the cytoplasm. It carries out the reaction (R)-4'-phosphopantetheine + ATP + H(+) = 3'-dephospho-CoA + diphosphate. The protein operates within cofactor biosynthesis; coenzyme A biosynthesis; CoA from (R)-pantothenate: step 4/5. Its function is as follows. Reversibly transfers an adenylyl group from ATP to 4'-phosphopantetheine, yielding dephospho-CoA (dPCoA) and pyrophosphate. This chain is Phosphopantetheine adenylyltransferase, found in Prochlorococcus marinus subsp. pastoris (strain CCMP1986 / NIES-2087 / MED4).